The chain runs to 630 residues: Probable potassium transport system protein Kup (630 aa).

12 consecutive transmembrane segments (helical) span residues 17-37 (LAIAAIGVVFGDIGTSPLYSL), 51-71 (PSAILGVISLLFWAIILVVGI), 105-125 (ITGLMMALGIFGACMFYGDAV), 144-164 (PQLSHLVLPITIVILIALFWI), 175-195 (LFGPIMVIWFVTIAALGVYHI), 218-238 (VLLAYVVLGSVVLVLTGAEAL), 255-275 (YVLVMPSLVLNYFGQGALLLL), 283-303 (PFFLLAPQWAALPLVVLSTVA), 344-364 (IYVPVVNWLLLFVILCIVIGF), 374-394 (YGIAVTATMVITTILAAVVMV), 402-422 (LLVAMIIGVFLVIDLGFFGAN), and 428-448 (QGGWLPLGIGALLFFLLMTWY).

Belongs to the HAK/KUP transporter (TC 2.A.72) family.

The protein localises to the cell inner membrane. It carries out the reaction K(+)(in) + H(+)(in) = K(+)(out) + H(+)(out). Functionally, transport of potassium into the cell. Likely operates as a K(+):H(+) symporter. This chain is Probable potassium transport system protein Kup, found in Burkholderia thailandensis (strain ATCC 700388 / DSM 13276 / CCUG 48851 / CIP 106301 / E264).